A 315-amino-acid polypeptide reads, in one-letter code: Protein phosphatase PTC7 homolog fig (315 aa).

The PPM-type phosphatase domain maps to 54–309 (KHSIASAKDN…DDITVILATV (256 aa)). 3 residues coordinate Mn(2+): Asp86, Gly87, and Asp231.

Belongs to the PP2C family. Requires Mg(2+) as cofactor. Mn(2+) is required as a cofactor.

It carries out the reaction O-phospho-L-seryl-[protein] + H2O = L-seryl-[protein] + phosphate. The catalysed reaction is O-phospho-L-threonyl-[protein] + H2O = L-threonyl-[protein] + phosphate. The polypeptide is Protein phosphatase PTC7 homolog fig (Drosophila willistoni (Fruit fly)).